Consider the following 266-residue polypeptide: Vitamin B12-binding protein (266 aa).

The N-terminal stretch at 1–22 (MVKQMFRALVALLLTLPVWLYA) is a signal peptide. In terms of domain architecture, Fe/B12 periplasmic-binding spans 25-266 (RVITLSPANT…QLCNALSQVN (242 aa)). Residues Tyr-50 and 242–246 (DWFER) each bind cyanocob(III)alamin. Cys-183 and Cys-259 form a disulfide bridge.

This sequence belongs to the BtuF family. In terms of assembly, the complex is composed of two ATP-binding proteins (BtuD), two transmembrane proteins (BtuC) and a solute-binding protein (BtuF).

It is found in the periplasm. Part of the ABC transporter complex BtuCDF involved in vitamin B12 import. Binds vitamin B12 and delivers it to the periplasmic surface of BtuC. The sequence is that of Vitamin B12-binding protein from Salmonella choleraesuis (strain SC-B67).